The chain runs to 498 residues: Delta(14)-sterol reductase erg24A (498 aa).

4 helical membrane passes run 30–50 (LGAF…TFLC), 91–111 (VTVW…FLPG), 136–156 (ILIL…FVVW), and 163–183 (YVQI…FVYA). Residue Asn257 is glycosylated (N-linked (GlcNAc...) asparagine). The next 3 membrane-spanning stretches (helical) occupy residues 275–295 (IVLS…MEPA), 302–322 (VIMD…VPFI), and 339–359 (LREI…FRGA). Residues Lys363, Arg367, Trp395, and 402–403 (NY) each bind NADP(+). The N-linked (GlcNAc...) asparagine glycan is linked to Asn429. Residues 444 to 464 (VRGWGMIFTYFFLVYFGALLI) traverse the membrane as a helical segment. NADP(+) is bound by residues Asp470, 474–478 (CKSKY), and Tyr485.

This sequence belongs to the ERG4/ERG24 family.

It is found in the endoplasmic reticulum membrane. Its pathway is steroid metabolism; ergosterol biosynthesis. In terms of biological role, delta(14)-sterol reductase; part of the third module of ergosterol biosynthesis pathway that includes the late steps of the pathway. Catalyzes the reduction of the C14=C15 double bond within 4,4,24-trimethyl ergosta-8,14,24(28)-trienolto produce 4,4-dimethylfecosterol. The third module or late pathway involves the ergosterol synthesis itself through consecutive reactions that mainly occur in the endoplasmic reticulum (ER) membrane. Firstly, the squalene synthase erg9 catalyzes the condensation of 2 farnesyl pyrophosphate moieties to form squalene, which is the precursor of all steroids. Squalene synthase is crucial for balancing the incorporation of farnesyl diphosphate (FPP) into sterol and nonsterol isoprene synthesis. Secondly, squalene is converted into lanosterol by the consecutive action of the squalene epoxidase erg1 and the lanosterol synthase erg7. Then, the delta(24)-sterol C-methyltransferase erg6 methylates lanosterol at C-24 to produce eburicol. Eburicol is the substrate of the sterol 14-alpha demethylase encoded by cyp51A and cyp51B, to yield 4,4,24-trimethyl ergosta-8,14,24(28)-trienol. The C-14 reductase erg24 then reduces the C14=C15 double bond which leads to 4,4-dimethylfecosterol. A sequence of further demethylations at C-4, involving the C-4 demethylation complex containing the C-4 methylsterol oxidases erg25A or erg25B, the sterol-4-alpha-carboxylate 3-dehydrogenase erg26 and the 3-keto-steroid reductase erg27, leads to the production of fecosterol via 4-methylfecosterol. The C-8 sterol isomerase erg2 then catalyzes the reaction which results in unsaturation at C-7 in the B ring of sterols and thus converts fecosterol to episterol. The sterol-C5-desaturase erg3B then catalyzes the introduction of a C-5 double bond in the B ring to produce 5-dehydroepisterol. The 2 other sterol-C5-desaturases, erg3A and erg3C, seem to be less important in ergosterol biosynthesis. The C-22 sterol desaturase erg5 further converts 5-dehydroepisterol into ergosta-5,7,22,24(28)-tetraen-3beta-ol by forming the C-22(23) double bond in the sterol side chain. Finally, ergosta-5,7,22,24(28)-tetraen-3beta-ol is substrate of the C-24(28) sterol reductases erg4A and erg4B to produce ergosterol. Possible alternative sterol biosynthetic pathways might exist from fecosterol to ergosterol, depending on the activities of the erg3 isoforms. This is Delta(14)-sterol reductase erg24A from Aspergillus fumigatus (strain ATCC MYA-4609 / CBS 101355 / FGSC A1100 / Af293) (Neosartorya fumigata).